Consider the following 570-residue polypeptide: Alpha-1,2-mannosyltransferase ALG9 (570 aa).

The disordered stretch occupies residues 1-37 (MDLTTTRQRRPLISDSSSSSSTKSYSKTDKPGRSNGG). Residues 14-25 (SDSSSSSSTKSY) are compositionally biased toward low complexity. 8 helical membrane-spanning segments follow: residues 129–149 (AVRL…VVAL), 160–180 (YAVA…SFLP), 208–228 (VVGV…VVIY), 237–257 (AFIA…LVDY), 297–317 (FNNF…YPVI), 324–344 (ALLV…LQPH), 349–369 (FLYP…ENIP), and 381–401 (SLLV…ILCA). Residue asparagine 473 is glycosylated (N-linked (GlcNAc...) asparagine).

The protein belongs to the glycosyltransferase 22 family.

It is found in the endoplasmic reticulum membrane. It carries out the reaction an alpha-D-Man-(1-&gt;2)-alpha-D-Man-(1-&gt;2)-alpha-D-Man-(1-&gt;3)-[alpha-D-Man-(1-&gt;3)-alpha-D-Man-(1-&gt;6)]-beta-D-Man-(1-&gt;4)-beta-D-GlcNAc-(1-&gt;4)-alpha-D-GlcNAc-diphospho-di-trans,poly-cis-dolichol + a di-trans,poly-cis-dolichyl beta-D-mannosyl phosphate = an alpha-D-Man-(1-&gt;2)-alpha-D-Man-(1-&gt;2)-alpha-D-Man-(1-&gt;3)-[alpha-D-Man-(1-&gt;2)-alpha-D-Man-(1-&gt;3)-alpha-D-Man-(1-&gt;6)]-beta-D-Man-(1-&gt;4)-beta-D-GlcNAc-(1-&gt;4)-alpha-D-GlcNAc-diphospho-di-trans,poly-cis-dolichol + a di-trans,poly-cis-dolichyl phosphate + H(+). The catalysed reaction is an alpha-D-Man-(1-&gt;2)-alpha-D-Man-(1-&gt;2)-alpha-D-Man-(1-&gt;3)-[alpha-D-Man-(1-&gt;2)-alpha-D-Man-(1-&gt;3)-[alpha-D-Man-(1-&gt;6)]-alpha-D-Man-(1-&gt;6)]-beta-D-Man-(1-&gt;4)-beta-D-GlcNAc-(1-&gt;4)-alpha-D-GlcNAc-diphospho-di-trans,poly-cis-dolichol + a di-trans,poly-cis-dolichyl beta-D-mannosyl phosphate = an alpha-D-Man-(1-&gt;2)-alpha-D-Man-(1-&gt;2)-alpha-D-Man-(1-&gt;3)-[alpha-D-Man-(1-&gt;2)-alpha-D-Man-(1-&gt;3)-[alpha-D-Man-(1-&gt;2)-alpha-D-Man-(1-&gt;6)]-alpha-D-Man-(1-&gt;6)]-beta-D-Man-(1-&gt;4)-beta-D-GlcNAc-(1-&gt;4)-alpha-D-GlcNAc-diphospho-di-trans,poly-cis-dolichol + a di-trans,poly-cis-dolichyl phosphate + H(+). Its pathway is protein modification; protein glycosylation. Functionally, mannosyltransferase that operates in the biosynthetic pathway of dolichol-linked oligosaccharides, the glycan precursors employed in protein asparagine (N)-glycosylation. The assembly of dolichol-linked oligosaccharides begins on the cytosolic side of the endoplasmic reticulum membrane and finishes in its lumen. The sequential addition of sugars to dolichol pyrophosphate produces dolichol-linked oligosaccharides containing fourteen sugars, including two GlcNAcs, nine mannoses and three glucoses. Once assembled, the oligosaccharide is transferred from the lipid to nascent proteins by oligosaccharyltransferases. In the lumen of the endoplasmic reticulum, catalyzes the addition of the seventh and ninth alpha-1,2-linked mannose residues to Man(6)GlcNAc(2)-PP-dolichol and Man(8)GlcNAc(2)-PP-dolichol respectively. The polypeptide is Alpha-1,2-mannosyltransferase ALG9 (ALG9) (Arabidopsis thaliana (Mouse-ear cress)).